The chain runs to 327 residues: Embigin (327 aa).

A signal peptide spans 1–32; it reads MRALPGLLEARARTPRLLLLQCLLAAARPSSA. Over 33–260 the chain is Extracellular; that stretch reads DGSAPDSPFT…ELVVLSYLVP (228 aa). N-linked (GlcNAc...) asparagine glycosylation is found at asparagine 54, asparagine 61, asparagine 75, asparagine 85, asparagine 100, asparagine 189, asparagine 196, asparagine 213, and asparagine 218. 2 Ig-like V-type domains span residues 71–158 and 159–253; these read PVEK…NFKV and PELH…IELV. Cystine bridges form between cysteine 88–cysteine 142 and cysteine 180–cysteine 237. A helical membrane pass occupies residues 261-281; the sequence is LKPFLVIVAEVILLVATILLC. The Cytoplasmic portion of the chain corresponds to 282 to 327; the sequence is EKYTQKKKKHSDEGKEFEQIEQLKSDDSNGIENNVPRHRKNESLGQ. A disordered region spans residues 287-327; it reads KKKKHSDEGKEFEQIEQLKSDDSNGIENNVPRHRKNESLGQ. Basic and acidic residues predominate over residues 291 to 308; it reads HSDEGKEFEQIEQLKSDD. Serine 309 carries the phosphoserine modification.

As to quaternary structure, interacts with SLC16A1, SLC16A6 and SLC16A7.

The protein resides in the cell membrane. The protein localises to the synapse. In terms of biological role, plays a role in the outgrowth of motoneurons and in the formation of neuromuscular junctions. Following muscle denervation, promotes nerve terminal sprouting and the formation of additional acetylcholine receptor clusters at synaptic sites without affecting terminal Schwann cell number or morphology. Delays the retraction of terminal sprouts following re-innervation of denervated endplates. May play a role in targeting the monocarboxylate transporters SLC16A1, SLC16A6 and SLC16A7 to the cell membrane. This Homo sapiens (Human) protein is Embigin (EMB).